A 108-amino-acid chain; its full sequence is UPF0060 membrane protein SH0717 (108 aa).

The next 4 helical transmembrane spans lie at 5–25 (IFIFLLAGLCEIGGGYLIWLW), 31–51 (SSWLGFIGGVILMMYGVIATF), 60–80 (VYAAYGGVFIVMSLIWAYIVD), and 86–106 (KYDLIGACICIIGVCVMILPS).

It belongs to the UPF0060 family.

Its subcellular location is the cell membrane. In Staphylococcus haemolyticus (strain JCSC1435), this protein is UPF0060 membrane protein SH0717.